Consider the following 304-residue polypeptide: Acetyl-coenzyme A carboxylase carboxyl transferase subunit beta (304 aa).

The CoA carboxyltransferase N-terminal domain maps to 25 to 294 (VWTKCDSCGQ…PSVVESKADT (270 aa)). 4 residues coordinate Zn(2+): C29, C32, C48, and C51. The segment at 29 to 51 (CDSCGQVLYRAELERNLEVCPKC) adopts a C4-type zinc-finger fold.

The protein belongs to the AccD/PCCB family. In terms of assembly, acetyl-CoA carboxylase is a heterohexamer composed of biotin carboxyl carrier protein (AccB), biotin carboxylase (AccC) and two subunits each of ACCase subunit alpha (AccA) and ACCase subunit beta (AccD). It depends on Zn(2+) as a cofactor.

Its subcellular location is the cytoplasm. The enzyme catalyses N(6)-carboxybiotinyl-L-lysyl-[protein] + acetyl-CoA = N(6)-biotinyl-L-lysyl-[protein] + malonyl-CoA. Its pathway is lipid metabolism; malonyl-CoA biosynthesis; malonyl-CoA from acetyl-CoA: step 1/1. Component of the acetyl coenzyme A carboxylase (ACC) complex. Biotin carboxylase (BC) catalyzes the carboxylation of biotin on its carrier protein (BCCP) and then the CO(2) group is transferred by the transcarboxylase to acetyl-CoA to form malonyl-CoA. This Yersinia pestis (strain Pestoides F) protein is Acetyl-coenzyme A carboxylase carboxyl transferase subunit beta.